A 335-amino-acid chain; its full sequence is 2-acylglycerol O-acyltransferase 2-A (335 aa).

2 helical membrane-spanning segments follow: residues 24 to 44 (WVFS…VLLF) and 47 to 67 (FWII…TPSK).

This sequence belongs to the diacylglycerol acyltransferase family.

Its subcellular location is the endoplasmic reticulum membrane. The protein localises to the cytoplasm. It localises to the perinuclear region. The enzyme catalyses a 2-acylglycerol + an acyl-CoA = a 1,2-diacylglycerol + CoA. The catalysed reaction is a 2-acylglycerol + an acyl-CoA = a 1,2-diacyl-sn-glycerol + CoA. It catalyses the reaction a 2-acylglycerol + an acyl-CoA = a 2,3-diacyl-sn-glycerol + CoA. It carries out the reaction a 1-acylglycerol + an acyl-CoA = a 1,2-diacylglycerol + CoA. The enzyme catalyses a 1-acylglycerol + an acyl-CoA = a 1,3-diacylglycerol + CoA. The catalysed reaction is 1-O-alkylglycerol + an acyl-CoA = 1-O-alkyl-3-acylglycerol + CoA. It catalyses the reaction an acyl-CoA + a 1,2-diacyl-sn-glycerol = a triacyl-sn-glycerol + CoA. The protein operates within glycerolipid metabolism; triacylglycerol biosynthesis. Functionally, catalyzes the formation of diacylglycerol from 2-monoacylglycerol and fatty acyl-CoA. Involved in glycerolipid synthesis and lipid metabolism. Catalyzes the formation of diacylglycerol, the precursor of triacylglycerol, by transferring the acyl chain of a fatty acyl-CoA to a monoacylglycerol. Plays a central role in absorption of dietary fat in the small intestine by catalyzing the resynthesis of triacylglycerol in enterocytes. Has a preference toward monoacylglycerols containing unsaturated fatty acids in an order of C18:3 &gt; C18:2 &gt; C18:1 &gt; C18:0 at sn-2. Able to use 1-monoalkylglycerol (1-MAkG, 1-O-alkylglycerol) as an acyl acceptor for the synthesis of monoalkyl-monoacylglycerol (MAMAG, 1-O-alkyl-3-acylglycerol or 1-O-alkyl-2-acylglycerol) and subsequently, with lower efficiency, may add another acyl chain producing monoalkyl-diacylglycerol (MADAG, 1-O-alkyl-2,3-diacylglycerol). Possesses weak but significant activity with diacylglycerol as substrate, producing triacylglycerol (triacyl-sn-glycerol). In Xenopus laevis (African clawed frog), this protein is 2-acylglycerol O-acyltransferase 2-A (mogat2-a).